Here is a 412-residue protein sequence, read N- to C-terminus: Peptidase T (412 aa).

His79 is a binding site for Zn(2+). Asp81 is a catalytic residue. Asp142 provides a ligand contact to Zn(2+). Residue Glu176 is the Proton acceptor of the active site. Zn(2+) is bound by residues Glu177, Asp199, and His381.

This sequence belongs to the peptidase M20B family. Requires Zn(2+) as cofactor.

The protein localises to the cytoplasm. It carries out the reaction Release of the N-terminal residue from a tripeptide.. Its function is as follows. Cleaves the N-terminal amino acid of tripeptides. This chain is Peptidase T, found in Exiguobacterium sp. (strain ATCC BAA-1283 / AT1b).